We begin with the raw amino-acid sequence, 373 residues long: Dual-specificity RNA methyltransferase RlmN (373 aa).

Glutamate 94 (proton acceptor) is an active-site residue. The region spanning 100–339 is the Radical SAM core domain; sequence EDDRATLCVS…VIVRKTRGDD (240 aa). Cysteine 107 and cysteine 344 form a disulfide bridge. Residues cysteine 114, cysteine 118, and cysteine 121 each coordinate [4Fe-4S] cluster. S-adenosyl-L-methionine is bound by residues 168–169, serine 200, 222–224, and asparagine 301; these read GE and SIH. Residue cysteine 344 is the S-methylcysteine intermediate of the active site.

It belongs to the radical SAM superfamily. RlmN family. The cofactor is [4Fe-4S] cluster.

It is found in the cytoplasm. The enzyme catalyses adenosine(2503) in 23S rRNA + 2 reduced [2Fe-2S]-[ferredoxin] + 2 S-adenosyl-L-methionine = 2-methyladenosine(2503) in 23S rRNA + 5'-deoxyadenosine + L-methionine + 2 oxidized [2Fe-2S]-[ferredoxin] + S-adenosyl-L-homocysteine. It carries out the reaction adenosine(37) in tRNA + 2 reduced [2Fe-2S]-[ferredoxin] + 2 S-adenosyl-L-methionine = 2-methyladenosine(37) in tRNA + 5'-deoxyadenosine + L-methionine + 2 oxidized [2Fe-2S]-[ferredoxin] + S-adenosyl-L-homocysteine. Functionally, specifically methylates position 2 of adenine 2503 in 23S rRNA and position 2 of adenine 37 in tRNAs. m2A2503 modification seems to play a crucial role in the proofreading step occurring at the peptidyl transferase center and thus would serve to optimize ribosomal fidelity. The chain is Dual-specificity RNA methyltransferase RlmN from Shewanella sp. (strain W3-18-1).